The primary structure comprises 274 residues: Large ribosomal subunit protein uL2 (274 aa).

The segment at 200–274 (HALEKSGKAG…SKYIIERRKK (75 aa)) is disordered. Basic residues-rich tracts occupy residues 207-220 (KAGR…RPRN) and 255-274 (LKTR…RRKK).

Belongs to the universal ribosomal protein uL2 family. In terms of assembly, part of the 50S ribosomal subunit. Forms a bridge to the 30S subunit in the 70S ribosome.

One of the primary rRNA binding proteins. Required for association of the 30S and 50S subunits to form the 70S ribosome, for tRNA binding and peptide bond formation. It has been suggested to have peptidyltransferase activity; this is somewhat controversial. Makes several contacts with the 16S rRNA in the 70S ribosome. This Parabacteroides distasonis (strain ATCC 8503 / DSM 20701 / CIP 104284 / JCM 5825 / NCTC 11152) protein is Large ribosomal subunit protein uL2.